The following is a 149-amino-acid chain: uncharacterized protein (149 aa).

The helical transmembrane segment at 124–144 (IIIIALIIILANYAPSIIGKI) threads the bilayer.

This sequence belongs to the M.jannaschii MJ0023/MJ0349/MJ1072/MJ1074/MJ1107/MJECL16 family.

The protein resides in the membrane. This is an uncharacterized protein from Methanocaldococcus jannaschii (strain ATCC 43067 / DSM 2661 / JAL-1 / JCM 10045 / NBRC 100440) (Methanococcus jannaschii).